Consider the following 502-residue polypeptide: Mannitol 2-dehydrogenase (502 aa).

37–48 (IVHVGVGGFHRA) serves as a coordination point for NAD(+).

It belongs to the mannitol dehydrogenase family. Monomer.

The catalysed reaction is D-mannitol + NAD(+) = D-fructose + NADH + H(+). Catalyzes the NAD(H)-dependent interconversion of D-fructose and D-mannitol in the mannitol metabolic pathway. This Aspergillus oryzae (strain ATCC 42149 / RIB 40) (Yellow koji mold) protein is Mannitol 2-dehydrogenase.